A 422-amino-acid chain; its full sequence is Protein krasavietz (422 aa).

The disordered stretch occupies residues M1–Y26. The 172-residue stretch at K244–E415 folds into the W2 domain. S407, S412, and S414 each carry phosphoserine.

This sequence belongs to the BZW family. In terms of tissue distribution, expressed in mushroom bodies.

Functionally, may be involved in memory formation. The protein is Protein krasavietz (kra) of Drosophila melanogaster (Fruit fly).